We begin with the raw amino-acid sequence, 323 residues long: Aldo-keto reductase family 1 member C21 (323 aa).

20–24 is an NADP(+) binding site; it reads GFGTA. Residue Lys31 participates in substrate binding. Asp50 serves as a coordination point for NADP(+). Tyr55 serves as the catalytic Proton donor. His117 is a binding site for substrate. NADP(+) is bound by residues 166–167, Gln190, 216–224, and 270–280; these read SN, YGVLGTQRY, and TSLKEERIKEN.

It belongs to the aldo/keto reductase family. In terms of assembly, monomer. As to expression, detected in kidney and brain.

The protein localises to the cytoplasm. The enzyme catalyses androsterone + NADP(+) = 5alpha-androstan-3,17-dione + NADPH + H(+). It carries out the reaction androsterone + NAD(+) = 5alpha-androstan-3,17-dione + NADH + H(+). With respect to regulation, inhibited by high concentrations of substrate. Its function is as follows. NADP-dependent 17-alpha-hydroxysteroid dehydrogenase that converts 5-alpha-androstane-3,17-dione into androsterone. Has lower 3-alpha-hydroxysteroid dehydrogenase activity. Has broad substrate specificity and acts on various 17-alpha-hydroxysteroids, 17-ketosteroids, 3-alpha hydroxysteroids and 3-ketosteroids. Reduction of keto groups is strictly stereoselective. Reduction of 17-ketosteroids yields only 17-alpha-hydroxysteroids. Likewise, reduction of 3-ketosteroids yields only 3-alpha-hydroxysteroids. The protein is Aldo-keto reductase family 1 member C21 (Akr1c21) of Mus musculus (Mouse).